Reading from the N-terminus, the 1106-residue chain is Translation initiation factor IF-2 (1106 aa).

Low complexity-rich tracts occupy residues 57-72 and 81-97; these read GKAA…PDAG and APST…SAPP. 2 disordered regions span residues 57 to 434 and 466 to 497; these read GKAA…QKVH and PSKP…RQRR. Composition is skewed to pro residues over residues 113-123 and 138-148; these read PAKPAPSAPPS. The segment covering 172 to 199 has biased composition (low complexity); the sequence is AKPVAKPASAPAPARPAQPLRPQASNRP. 2 stretches are compositionally biased toward pro residues: residues 200-214 and 223-235; these read PQQP…PAAK and TAPP…PGAP. Composition is skewed to low complexity over residues 251–292, 319–329, and 395–405; these read PNQQ…QQRR, PQGRQGGAPSR, and YRPAAAPGMAG. Residues 408–422 are compositionally biased toward basic and acidic residues; it reads RRPDWDDSARLDALR. Positions 482–497 are enriched in basic residues; that stretch reads ALRRRKKETTRQRQRR. Residues 598–771 enclose the tr-type G domain; it reads RRPPVVTVMG…LLVTEVEDLK (174 aa). Residues 607–614 form a G1 region; that stretch reads GHVDHGKT. 607–614 contacts GTP; the sequence is GHVDHGKT. The G2 stretch occupies residues 632–636; that stretch reads GITQH. The G3 stretch occupies residues 657-660; sequence DTPG. GTP contacts are provided by residues 657 to 661 and 711 to 714; these read DTPGH and NKVD. The G4 stretch occupies residues 711–714; sequence NKVD. The tract at residues 747 to 749 is G5; that stretch reads SAL.

Belongs to the TRAFAC class translation factor GTPase superfamily. Classic translation factor GTPase family. IF-2 subfamily.

Its subcellular location is the cytoplasm. In terms of biological role, one of the essential components for the initiation of protein synthesis. Protects formylmethionyl-tRNA from spontaneous hydrolysis and promotes its binding to the 30S ribosomal subunits. Also involved in the hydrolysis of GTP during the formation of the 70S ribosomal complex. The sequence is that of Translation initiation factor IF-2 from Synechococcus sp. (strain RCC307).